We begin with the raw amino-acid sequence, 650 residues long: Secretin OutD (650 aa).

A signal peptide spans 1–18; it reads MLLLSGSVLLMASSLAWS. Residues 20–115 form an N0 region; the sequence is EFSASFKGTD…LATDRQPGIG (96 aa). The interval 117 to 181 is N1; it reads EVVTRVVPVN…TIVERVDQTG (65 aa). The segment at 182–255 is N2; sequence DRNVTTIPLS…MVKQLDRQQA (74 aa). The tract at residues 258-330 is N3; that stretch reads GNTKVIYLKY…DLEQVIAQLD (73 aa). Residues 335–585 are secretin; the sequence is QVLVEAIIAE…LFIRPSIIRD (251 aa). A s domain region spans residues 587 to 650; that stretch reads SQFQSASASK…IVAFYPAGGK (64 aa).

Belongs to the bacterial secretin family. GSP D subfamily. Forms a cylindrical channel with 15 subunits.

The protein localises to the cell outer membrane. In terms of biological role, involved in a type II secretion system (T2SS, formerly general secretion pathway, GSP) for the export of proteins. Required for the translocation of the multiple pectic enzymes. This subunit forms the outer membrane channel. The protein is Secretin OutD (outD) of Pectobacterium carotovorum subsp. carotovorum (Erwinia carotovora subsp. carotovora).